Reading from the N-terminus, the 204-residue chain is UPF0637 protein SaurJH9_1166 (204 aa).

The protein belongs to the UPF0637 family.

This is UPF0637 protein SaurJH9_1166 from Staphylococcus aureus (strain JH9).